Consider the following 278-residue polypeptide: uncharacterized protein (278 aa).

A compositionally biased stretch (basic and acidic residues) spans 1–16 (MFGLKVKDAQKDDQKS). Disordered regions lie at residues 1-86 (MFGL…RGSN) and 98-126 (FGTTSSSESGQSGTQGSTPSNPGPWTPWL). 2 stretches are compositionally biased toward low complexity: residues 33 to 45 (QGTSTTTQRRGSS) and 99 to 117 (GTTSSSESGQSGTQGSTPS).

The protein belongs to the adhesin P1 family.

This is an uncharacterized protein from Mycoplasma pneumoniae (strain ATCC 29342 / M129 / Subtype 1) (Mycoplasmoides pneumoniae).